Reading from the N-terminus, the 146-residue chain is Hemoglobin subunit beta-1/2 (146 aa).

Position 1 is an N-acetylvaline (valine 1). The region spanning 2–146 (HLTGEEKSGL…VANALAHKYH (145 aa)) is the Globin domain. Threonine 12 carries the phosphothreonine modification. Lysine 59 carries the N6-acetyllysine modification. Histidine 63 provides a ligand contact to heme b. An N6-acetyllysine modification is found at lysine 82. Histidine 92 is a binding site for heme b. At cysteine 93 the chain carries S-nitrosocysteine. Lysine 144 carries the post-translational modification N6-acetyllysine.

It belongs to the globin family. In terms of assembly, heterotetramer of two alpha chains and two beta chains. Red blood cells.

In terms of biological role, involved in oxygen transport from the lung to the various peripheral tissues. This chain is Hemoglobin subunit beta-1/2 (HBB), found in Physeter macrocephalus (Sperm whale).